A 581-amino-acid polypeptide reads, in one-letter code: Ras-specific guanine nucleotide-releasing factor RalGPS1 (581 aa).

The segment at 1-31 is disordered; that stretch reads MYRRNGLPASVSITSRNTQDSSSSESLDGRS. Positions 49–288 constitute a Ras-GEF domain; that stretch reads TPEEFASQIT…YSLSLKIEPG (240 aa). The segment at 320-339 is disordered; that stretch reads PDTSVVAHLPTPPPARHRKS. The PXXP signature appears at 329 to 332; that stretch reads PTPP. Residues 455–567 form the PH domain; sequence SITIEGPLRR…WHRHLAEACR (113 aa).

Its subcellular location is the cytoplasm. The protein localises to the cell membrane. Functionally, guanine nucleotide exchange factor. May be involved in cytoskeletal organization. The polypeptide is Ras-specific guanine nucleotide-releasing factor RalGPS1 (ralgps1) (Danio rerio (Zebrafish)).